The primary structure comprises 140 residues: Fatty acid-binding protein 12 (140 aa).

Residues R107 and R127 to Y129 each bind a fatty acid.

The protein belongs to the calycin superfamily. Fatty-acid binding protein (FABP) family. Expressed in a number of retinoblastoma cell lines.

In terms of biological role, may play a role in lipid transport. This is Fatty acid-binding protein 12 (FABP12) from Homo sapiens (Human).